A 305-amino-acid polypeptide reads, in one-letter code: Aurasperone B biosynthesis cluster protein A (305 aa).

Residues 1 to 26 form the signal peptide; the sequence is MSIFFSIRFWPAAISAAILWLPQVLG. N-linked (GlcNAc...) asparagine glycosylation is found at Asn-29, Asn-34, Asn-64, Asn-83, Asn-132, Asn-183, Asn-218, and Asn-288.

It belongs to the bfoA family.

In terms of biological role, part of the gene cluster that mediates the biosynthesis of aurasperone B, a dimeric gamma-naphthopyrone. The first step in the biosynthesis of aurasperone B is the production of gamma-naphthopyrone precursor YWA1 by the non-reducing polyketide synthase albA, via condensation of one acetyl-CoA starter unit with 6 malonyl-CoA units. YWA1 is then methylated by aunE at position C-6 to yield foncesin which is further methylated at position C-8 by aunD to produce fonsecin B. A key enzyme in the biosynthetic pathway is the cytochrome P450 monooxygenase aunB which catalyzes the oxidative dimerization of fonsecin B to aurasperone B. AunB also catalyzes the oxidative dimerization of rubrofusarin B into aurasperone A. In Aspergillus niger (strain ATCC 1015 / CBS 113.46 / FGSC A1144 / LSHB Ac4 / NCTC 3858a / NRRL 328 / USDA 3528.7), this protein is Aurasperone B biosynthesis cluster protein A.